The primary structure comprises 293 residues: Putative ABC transporter ATP-binding protein AF_0731 (293 aa).

The region spanning 2-236 is the ABC transporter domain; the sequence is IEAVDLHFCY…RKLGIRSFSL (235 aa). 34–41 serves as a coordination point for ATP; it reads GRNGAGKT.

This sequence belongs to the ABC transporter superfamily.

It is found in the cell membrane. Its function is as follows. Probably part of an ABC transporter complex. Responsible for energy coupling to the transport system. The sequence is that of Putative ABC transporter ATP-binding protein AF_0731 from Archaeoglobus fulgidus (strain ATCC 49558 / DSM 4304 / JCM 9628 / NBRC 100126 / VC-16).